Reading from the N-terminus, the 65-residue chain is Large ribosomal subunit protein bL35 (65 aa).

It belongs to the bacterial ribosomal protein bL35 family.

The chain is Large ribosomal subunit protein bL35 from Pectobacterium atrosepticum (strain SCRI 1043 / ATCC BAA-672) (Erwinia carotovora subsp. atroseptica).